We begin with the raw amino-acid sequence, 244 residues long: MLYRDEAIVLRTHKLGEADRIVTLLTRQRGRVRAVAKGVRRTTSRFGSRLEPFTHVDLQLAEGRNLDTITQAETLTPFSKGLGLDYDRYTAGTVMLETADRLVAEEREPSVQQFLLLVGGLRAMVAGEHAPGQVLDSYLLRSLAVAGYAPSFEHCARCGTLSAEGAHRWFNPSMGGMLCSTCRVPGSASPAPETVALLGALLAGDWAVVDPAAARNLKEASTLVAAYLAWHLERGLKSMAYVER.

Belongs to the RecO family.

Functionally, involved in DNA repair and RecF pathway recombination. The polypeptide is DNA repair protein RecO (Nocardioides sp. (strain ATCC BAA-499 / JS614)).